A 238-amino-acid chain; its full sequence is Bacterial microcompartment shell protein PduB (238 aa).

2 consecutive BMC circularly permuted domains span residues 14-125 (FVGA…VYNA) and 126-225 (KAGH…LSQF). The cysteines at positions 158 and 197 are disulfide-linked.

Belongs to the EutL/PduB family. Homotrimerizes to form a pseudohexamer with a central pore 7.5 Angstroms wide and 22 Angstroms long; the pore channel in the crystal binds up to 4 glycerol molecules. A disulfide bond forms in the pore, it is not clear if this is an artifact. The trimers pack into an array.

Its subcellular location is the bacterial microcompartment. Its pathway is polyol metabolism; 1,2-propanediol degradation. Functionally, one of the major shell proteins of the bacterial microcompartment (BMC) dedicated to 1,2-propanediol (1,2-PD) degradation. Probably involved in a propanediol fermentation/reuterin formation pathway. This chain is Bacterial microcompartment shell protein PduB, found in Limosilactobacillus reuteri (strain DSM 20016) (Lactobacillus reuteri).